The primary structure comprises 296 residues: Probable deoxyuridine 5'-triphosphate nucleotidohydrolase (296 aa).

Positions 66-102 (EIDKNIVKNLEDKVNCLEQDVQYLKNELKKKDADWQQ) form a coiled coil.

Belongs to the dUTPase family.

The catalysed reaction is dUTP + H2O = dUMP + diphosphate + H(+). Its pathway is pyrimidine metabolism; dUMP biosynthesis; dUMP from dCTP (dUTP route): step 2/2. Functionally, this enzyme is involved in nucleotide metabolism: it produces dUMP, the immediate precursor of thymidine nucleotides and it decreases the intracellular concentration of dUTP so that uracil cannot be incorporated into DNA. The protein is Probable deoxyuridine 5'-triphosphate nucleotidohydrolase of Acheta domesticus (House cricket).